The primary structure comprises 171 residues: AN1-type zinc finger protein 2A (171 aa).

AN1-type zinc fingers lie at residues 4–52 (PDLG…KKDV) and 94–142 (KVFT…SSVS). The Zn(2+) site is built by cysteine 10, cysteine 15, cysteine 25, cysteine 28, cysteine 33, histidine 36, histidine 42, cysteine 44, cysteine 100, cysteine 105, cysteine 115, cysteine 118, cysteine 123, histidine 126, histidine 132, and cysteine 134. Positions 135 to 171 (QAGSSSVSRGRSSASRAAEQKPSGVSWLAQRLRRTVK) are disordered. Low complexity predominate over residues 136-151 (AGSSSVSRGRSSASRA).

The protein resides in the cytoplasm. The protein localises to the nucleus. The polypeptide is AN1-type zinc finger protein 2A (Zfand2a) (Rattus norvegicus (Rat)).